The sequence spans 348 residues: Structural glycoprotein p40 (348 aa).

It belongs to the baculoviridae gp41 family. Post-translationally, O-glycosylated; contains N-acetylglucosamine side chains.

This is Structural glycoprotein p40 (P40) from Bombyx mori nuclear polyhedrosis virus (BmNPV).